The following is a 101-amino-acid chain: Small ribosomal subunit protein uS14 (101 aa).

Residues 1–22 are disordered; the sequence is MAKVSSIKKNESRKKKSQSLHN. The segment covering 11-22 has biased composition (basic residues); the sequence is ESRKKKSQSLHN.

This sequence belongs to the universal ribosomal protein uS14 family. As to quaternary structure, part of the 30S ribosomal subunit. Contacts proteins S3 and S10.

Its function is as follows. Binds 16S rRNA, required for the assembly of 30S particles and may also be responsible for determining the conformation of the 16S rRNA at the A site. This Rickettsia conorii (strain ATCC VR-613 / Malish 7) protein is Small ribosomal subunit protein uS14.